Here is a 363-residue protein sequence, read N- to C-terminus: Chorismate synthase (363 aa).

The NADP(+) site is built by arginine 47 and arginine 53. FMN contacts are provided by residues 124 to 126 (RSS), glycine 286, 301 to 305 (KPTAT), and arginine 327.

This sequence belongs to the chorismate synthase family. As to quaternary structure, homotetramer. It depends on FMNH2 as a cofactor.

The enzyme catalyses 5-O-(1-carboxyvinyl)-3-phosphoshikimate = chorismate + phosphate. The protein operates within metabolic intermediate biosynthesis; chorismate biosynthesis; chorismate from D-erythrose 4-phosphate and phosphoenolpyruvate: step 7/7. Catalyzes the anti-1,4-elimination of the C-3 phosphate and the C-6 proR hydrogen from 5-enolpyruvylshikimate-3-phosphate (EPSP) to yield chorismate, which is the branch point compound that serves as the starting substrate for the three terminal pathways of aromatic amino acid biosynthesis. This reaction introduces a second double bond into the aromatic ring system. The protein is Chorismate synthase of Thermosynechococcus vestitus (strain NIES-2133 / IAM M-273 / BP-1).